The chain runs to 142 residues: MVLGGLMKLFDEFKAFVMRGNVVDLAVGVIIGAAFGKIVTSLVNDIFMPIIGMIIGNIDFSSLVIKLGEPVEGAEQAAIRYGMFIQEIVNFLIIALCVFVAIKLINKLQKKKEEASAPAPGPTKEEVLLTEIRDALNKIAEK.

3 consecutive transmembrane segments (helical) span residues 15 to 35 (AFVM…GAAF), 38 to 58 (IVTS…IGNI), and 82 to 102 (GMFI…FVAI).

This sequence belongs to the MscL family. As to quaternary structure, homopentamer.

The protein resides in the cell inner membrane. Functionally, channel that opens in response to stretch forces in the membrane lipid bilayer. May participate in the regulation of osmotic pressure changes within the cell. This chain is Large-conductance mechanosensitive channel, found in Fusobacterium nucleatum subsp. nucleatum (strain ATCC 25586 / DSM 15643 / BCRC 10681 / CIP 101130 / JCM 8532 / KCTC 2640 / LMG 13131 / VPI 4355).